Reading from the N-terminus, the 224-residue chain is Ribonuclease T (224 aa).

The 175-residue stretch at 32-206 (VVVDVETGGF…YDTEKTAELF (175 aa)) folds into the Exonuclease domain. 4 residues coordinate Mg(2+): aspartate 35, glutamate 37, histidine 193, and aspartate 198. Catalysis depends on histidine 193, which acts as the Proton donor/acceptor.

Belongs to the RNase T family. As to quaternary structure, homodimer. It depends on Mg(2+) as a cofactor.

In terms of biological role, trims short 3' overhangs of a variety of RNA species, leaving a one or two nucleotide 3' overhang. Responsible for the end-turnover of tRNA: specifically removes the terminal AMP residue from uncharged tRNA (tRNA-C-C-A). Also appears to be involved in tRNA biosynthesis. The protein is Ribonuclease T of Pseudomonas aeruginosa (strain UCBPP-PA14).